The chain runs to 293 residues: tRNA-cytidine(32) 2-sulfurtransferase (293 aa).

Residues 62–67 carry the PP-loop motif motif; sequence SGGKDS. The [4Fe-4S] cluster site is built by Cys-137, Cys-140, and Cys-228.

The protein belongs to the TtcA family. In terms of assembly, homodimer. Requires Mg(2+) as cofactor. [4Fe-4S] cluster serves as cofactor.

The protein resides in the cytoplasm. The catalysed reaction is cytidine(32) in tRNA + S-sulfanyl-L-cysteinyl-[cysteine desulfurase] + AH2 + ATP = 2-thiocytidine(32) in tRNA + L-cysteinyl-[cysteine desulfurase] + A + AMP + diphosphate + H(+). Its pathway is tRNA modification. Catalyzes the ATP-dependent 2-thiolation of cytidine in position 32 of tRNA, to form 2-thiocytidine (s(2)C32). The sulfur atoms are provided by the cysteine/cysteine desulfurase (IscS) system. The protein is tRNA-cytidine(32) 2-sulfurtransferase of Brucella suis (strain ATCC 23445 / NCTC 10510).